Consider the following 692-residue polypeptide: NADH-ubiquinone oxidoreductase chain 5 (692 aa).

Helical transmembrane passes span 5–23, 30–52, 81–103, 112–129, 133–155, 168–190, 200–222, 243–262, 272–294, 301–319, 329–351, 364–386, 409–431, 452–471, 511–528, 535–557, and 615–637; these read IIIL…GRKV, ILGC…EVGF, LTVS…SIGY, RFFS…ILVT, YLLM…SFWF, FLTN…WSLG, LAPY…GAMA, VSAL…LLIR, TVLL…IGLF, IIAY…AIGL, LINH…HAVV, SFLP…FPFM, NVYF…VIYL, IFLS…FGYL, LLPF…IVYY, VVDF…RFLV, and YALY…SIFF.

This sequence belongs to the complex I subunit 5 family.

Its subcellular location is the mitochondrion inner membrane. It carries out the reaction a ubiquinone + NADH + 5 H(+)(in) = a ubiquinol + NAD(+) + 4 H(+)(out). Functionally, core subunit of the mitochondrial membrane respiratory chain NADH dehydrogenase (Complex I) that is believed to belong to the minimal assembly required for catalysis. Complex I functions in the transfer of electrons from NADH to the respiratory chain. The immediate electron acceptor for the enzyme is believed to be ubiquinone. This is NADH-ubiquinone oxidoreductase chain 5 (nd5) from Hypocrea jecorina (Trichoderma reesei).